The sequence spans 605 residues: UPF0313 protein GSU2873 (605 aa).

The Radical SAM core domain maps to 291–561 (AYEQIRASVT…LQKALLLWHL (271 aa)). [4Fe-4S] cluster is bound by residues Cys305, Cys309, and Cys312. The interval 586-605 (GGAAGGGGGRSGSGFRPGRT) is disordered. Residues 587–597 (GAAGGGGGRSG) are compositionally biased toward gly residues.

This sequence belongs to the UPF0313 family. It depends on [4Fe-4S] cluster as a cofactor.

The protein is UPF0313 protein GSU2873 of Geobacter sulfurreducens (strain ATCC 51573 / DSM 12127 / PCA).